A 305-amino-acid chain; its full sequence is PI-PLC X domain-containing protein 2 (305 aa).

Positions 42-215 (HLHNLPLSNL…NCQVLIFYHC (174 aa)) constitute a PI-PLC X-box domain. Active-site residues include H57 and H132.

As to expression, widely expressed.

The protein localises to the nucleus. It carries out the reaction a 1,2-diacyl-sn-glycero-3-phospho-(1D-myo-inositol) + H2O = 1D-myo-inositol 1-phosphate + a 1,2-diacyl-sn-glycerol + H(+). In terms of biological role, catalyzes the hydrolysis of inositol from phosphatidylinositol (1,2-diacyl-sn-glycero-3-phospho-(1D-myo-inositol), PI). Could also hydrolyze various multi-phosphorylated derivatives of PI, such as phosphatidylinositol-4,5 bisphosphate (PIP2), releasing inositol-1,4,5-trisphosphate (IP3) and the protein kinase C activator diacylglycerol (DAG), therefore mediating cell signaling. The chain is PI-PLC X domain-containing protein 2 (PLCXD2) from Homo sapiens (Human).